A 335-amino-acid chain; its full sequence is Glycerol-3-phosphate dehydrogenase [NAD(P)+] (335 aa).

An NADPH-binding site is contributed by Lys-109. The sn-glycerol 3-phosphate site is built by Lys-109, Gly-141, and Ser-143. An NADPH-binding site is contributed by Ala-145. Positions 196, 249, 259, 260, and 261 each coordinate sn-glycerol 3-phosphate. The active-site Proton acceptor is the Lys-196. An NADPH-binding site is contributed by Arg-260. NADPH is bound at residue Glu-283.

Belongs to the NAD-dependent glycerol-3-phosphate dehydrogenase family.

Its subcellular location is the cytoplasm. It carries out the reaction sn-glycerol 3-phosphate + NAD(+) = dihydroxyacetone phosphate + NADH + H(+). The enzyme catalyses sn-glycerol 3-phosphate + NADP(+) = dihydroxyacetone phosphate + NADPH + H(+). It participates in membrane lipid metabolism; glycerophospholipid metabolism. Functionally, catalyzes the reduction of the glycolytic intermediate dihydroxyacetone phosphate (DHAP) to sn-glycerol 3-phosphate (G3P), the key precursor for phospholipid synthesis. In Mycoplasma mobile (strain ATCC 43663 / 163K / NCTC 11711) (Mesomycoplasma mobile), this protein is Glycerol-3-phosphate dehydrogenase [NAD(P)+].